The primary structure comprises 682 residues: Heat shock 70 kDa protein 10, mitochondrial (682 aa).

The transit peptide at methionine 1–phenylalanine 50 directs the protein to the mitochondrion. The tract at residues lysine 646–lysine 682 is disordered. Positions methionine 651–glycine 667 are enriched in gly residues. Residues proline 673–lysine 682 are compositionally biased toward acidic residues.

The protein belongs to the heat shock protein 70 (TC 1.A.33) family. DnaK subfamily.

Its subcellular location is the mitochondrion. Its function is as follows. Chaperone involved in the maturation of iron-sulfur [Fe-S] cluster-containing proteins. Has a low intrinsic ATPase activity which is markedly stimulated by HSCB and ISU1. In cooperation with other chaperones, Hsp70s are key components that facilitate folding of de novo synthesized proteins, assist translocation of precursor proteins into organelles, and are responsible for degradation of damaged protein under stress conditions. The sequence is that of Heat shock 70 kDa protein 10, mitochondrial from Arabidopsis thaliana (Mouse-ear cress).